The sequence spans 303 residues: Taste receptor type 2 member 13 (303 aa).

The Extracellular portion of the chain corresponds to 1–7 (MESALLS). Residues 8–28 (ILTLVIIAEFVIGNLSNGFXV) traverse the membrane as a helical segment. Residues 29 to 55 (LINCIDWVSKRQLSSVDKILTFLAISR) lie on the Cytoplasmic side of the membrane. The helical transmembrane segment at 56 to 76 (IGLIWELLVSWFLGLHYLAIF) threads the bilayer. The Extracellular segment spans residues 77-85 (VSGTGLRIM). Residues 86-106 (IFSWVVSNHFSLWLATILSIF) traverse the membrane as a helical segment. Over 107 to 128 (YLLKIASFSSPAFLYLKWRVNQ) the chain is Cytoplasmic. Residues 129 to 149 (VILMILLGTLVFLFLNLIQIN) traverse the membrane as a helical segment. Residues 150–184 (IHIKDWLDRCERNTIWNFSMSGLPTFSVPVKFTMT) lie on the Extracellular side of the membrane. A glycan (N-linked (GlcNAc...) asparagine) is linked at Asn166. The chain crosses the membrane as a helical span at residues 185 to 205 (MFSLAPFTVALISFLLLIFSL). The Cytoplasmic portion of the chain corresponds to 206–232 (RKHLQKMQLNYKGHREPRTKAHINALK). A helical membrane pass occupies residues 233–253 (IVISFLLLYASFFLCILISWI). The Extracellular segment spans residues 254 to 261 (SELYQNTL). The chain crosses the membrane as a helical span at residues 262–282 (IHMFCQTIGVFYPSSHSFLLI). Residues 283 to 303 (LGNPKLRQASLLVAAKVWAKR) are Cytoplasmic-facing.

Belongs to the G-protein coupled receptor T2R family.

It is found in the membrane. Its function is as follows. Receptor that may play a role in the perception of bitterness and is gustducin-linked. May play a role in sensing the chemical composition of the gastrointestinal content. The activity of this receptor may stimulate alpha gustducin, mediate PLC-beta-2 activation and lead to the gating of TRPM5. The chain is Taste receptor type 2 member 13 (TAS2R13) from Papio hamadryas (Hamadryas baboon).